The chain runs to 922 residues: Disintegrin and metalloproteinase domain-containing protein 10 homolog (922 aa).

Positions 1–26 (MSSPIRNRLQLVVTLIFCLFFENVNG) are cleaved as a signal peptide. Residues 27–228 (LNNFIDNFET…YMTMGGRSKR (202 aa)) constitute a propeptide that is removed on maturation. Residues Asn-74, Asn-185, and Asn-346 are each glycosylated (N-linked (GlcNAc...) asparagine). Residues 229 to 745 (ANTLRDHDGL…ETLTQWAQDN (517 aa)) lie on the Extracellular side of the membrane. Positions 242-480 (RTCSLYMQAD…CSVKNISAVL (239 aa)) constitute a Peptidase M12B domain. A Zn(2+)-binding site is contributed by His-426. Residue Glu-427 is part of the active site. Zn(2+)-binding residues include His-430 and His-436. Cys-442 and Cys-471 form a disulfide bridge. An N-linked (GlcNAc...) asparagine glycan is attached at Asn-475. The Disintegrin domain occupies 511–615 (SAFCGNQIYE…QCPVSPPKHD (105 aa)). 5 cysteine pairs are disulfide-bonded: Cys-542/Cys-577, Cys-564/Cys-572, Cys-588/Cys-607, Cys-594/Cys-626, and Cys-619/Cys-631. An N-linked (GlcNAc...) asparagine glycan is attached at Asn-632. 4 disulfide bridges follow: Cys-636/Cys-659, Cys-644/Cys-665, Cys-655/Cys-707, and Cys-700/Cys-713. Asn-677 carries N-linked (GlcNAc...) asparagine glycosylation. The helical transmembrane segment at 746–766 (WWVVGVGGLVFLVIMALFVKC) threads the bilayer. The Cytoplasmic segment spans residues 767–922 (CAVHTPSTNP…SGNGGKKKGK (156 aa)). Disordered stretches follow at residues 797–837 (QHRQ…PSAP) and 864–922 (PGSS…KKGK). A compositionally biased stretch (low complexity) spans 805-834 (AAGSVPPGPGAQPRSGAASAPSRTTPSARP).

As to quaternary structure, may interact with tetraspanin tsp-12; the interaction promotes sup-17 cell membrane localization. The cofactor is Zn(2+). In terms of tissue distribution, expressed in the germline.

The protein localises to the cell membrane. It is found in the basolateral cell membrane. The protein resides in the cytoplasmic vesicle membrane. The enzyme catalyses Endopeptidase of broad specificity.. In terms of biological role, metalloprotease. Acts together with protease adm-4 and in a cell autonomous manner to facilitate lin-12/Notch signaling during developmental cell fate decision, including anchor cell/ventral uterine precursor cell decision and vulva precursor cell specification. By modulating glp-1/Notch signaling, plays a role in germline development. Probably by modulating BMP-like Sma/Mab signaling via the shedding of unc-40 ectodomain, involved in the regulation of body size and mesoderm development. Probably by shedding ephrin efn-4, regulates axon guidance of SDQL neuron during development. The chain is Disintegrin and metalloproteinase domain-containing protein 10 homolog from Caenorhabditis elegans.